Here is a 716-residue protein sequence, read N- to C-terminus: Iron-sulfur clusters transporter atm1, mitochondrial (716 aa).

The transit peptide at 1–18 (MAPSIKLSTMATSLHRAH) directs the protein to the mitochondrion. Over 19–123 (GTSALLRRPR…PKGSWGDKAR (105 aa)) the chain is Mitochondrial matrix. The tract at residues 57-87 (LFAPNGSAKDESKPAVSTVPKTTGRGPSDPL) is disordered. A helical transmembrane segment spans residues 124 to 145 (VLLAIGLLVGGKVLNVQVPFYF). Positions 124–414 (VLLAIGLLVG…LGSVYRELRQ (291 aa)) constitute an ABC transmembrane type-1 domain. The Mitochondrial intermembrane segment spans residues 146 to 168 (REIVDSLNIDFSTTGGSVTAVAG). The chain crosses the membrane as a helical span at residues 169–192 (AMILGYGAARVGAVVSQELRNAVF). The Mitochondrial matrix portion of the chain corresponds to 193 to 241 (ASVAQKAIRKVARNTFEHLLNLDLSFHLSKQTGGLTRAIDRGTKGISFL). A helical transmembrane segment spans residues 242–265 (LTSMVFHIVPTALEISMVCGILTY). Position 266 (N266) is a topological domain, mitochondrial intermembrane. A helical transmembrane segment spans residues 267–287 (FGWQYAALTALTMVSYTAFTI). Residues 288 to 353 (LTTAWRTKFR…NSIKVATSLA (66 aa)) are Mitochondrial matrix-facing. Residues 293 to 297 (RTKFR) and 356 to 359 (NSGQ) each bind glutathione. Residues 354-372 (FLNSGQNIIFSSALTVMMY) form a helical membrane-spanning segment. Over 373–387 (MGAHGVATGQLTVGD) the chain is Mitochondrial intermembrane. Residues 388-409 (LVLINQLVFQLSVPLNFLGSVY) form a helical membrane-spanning segment. G406 is a glutathione binding site. The Mitochondrial matrix segment spans residues 410–716 (RELRQSLLDM…KEEVGEKKEA (307 aa)). The 242-residue stretch at 449 to 690 (IEFKDVTFGY…NGVYAQLWRA (242 aa)) folds into the ABC transporter domain. ATP contacts are provided by residues Y458 and 482 to 493 (GPSGCGKSTLLR). A disordered region spans residues 697–716 (EEGEVSKKGEKEEVGEKKEA). The segment covering 700 to 716 (EVSKKGEKEEVGEKKEA) has biased composition (basic and acidic residues).

Belongs to the ABC transporter superfamily. ABCB family. Heavy Metal importer (TC 3.A.1.210) subfamily. As to quaternary structure, homodimer.

It is found in the mitochondrion inner membrane. In terms of biological role, performs an essential function in the generation of cytoplasmic iron-sulfur proteins by mediating the ATP-dependent export of Fe/S cluster precursors synthesized by egt-3 and other mitochondrial proteins. Hydrolyzes ATP. Binds glutathione and may function by transporting a glutathione-conjugated iron-sulfur compound. This Neurospora crassa (strain ATCC 24698 / 74-OR23-1A / CBS 708.71 / DSM 1257 / FGSC 987) protein is Iron-sulfur clusters transporter atm1, mitochondrial.